The chain runs to 393 residues: Sugar efflux transporter B (393 aa).

12 helical membrane passes run 13–33 (FDLT…AGAL), 52–72 (MVGF…QFLA), 84–101 (LIVF…LFAW), 105–124 (YFIL…TANP), 152–172 (VSLA…GFSF), 174–194 (VMYL…WFFL), 219–239 (LLLF…IINM), 253–273 (LAGV…LIAG), 283–303 (LLMC…LLAH), 308–328 (LLGL…IGML), 344–364 (LYTN…GIAA), and 366–386 (IWNY…TMFC).

Belongs to the major facilitator superfamily. Set transporter family.

It is found in the cell inner membrane. Involved in the efflux of sugars. The physiological role may be the detoxification of non-metabolizable sugar analogs. Can transport lactose and glucose. This is Sugar efflux transporter B (setB) from Salmonella typhimurium (strain LT2 / SGSC1412 / ATCC 700720).